Consider the following 1520-residue polypeptide: Integrator complex subunit 3 homolog (1520 aa).

Disordered stretches follow at residues 1 to 23 (MMNQQQQQQQPPTTSPTQQQQLT), 523 to 671 (QLHS…NSRV), 689 to 801 (VISQ…SPST), 813 to 922 (DEPP…QNIK), 1116 to 1177 (FSNS…NITN), and 1489 to 1520 (QSSNIKNDNNPTLSKHQNSDDDSNPKKRFRKE). Composition is skewed to low complexity over residues 527-549 (QQQQLQQQQLQQPQQPQQQQQPP) and 557-595 (QPINKQLPLQMSPQQQSQQQLQQQQLQQQLQQQQQQQQP). The segment covering 596–612 (PQQPPPQQQPQQQPPQQ) has biased composition (pro residues). A compositionally biased stretch (low complexity) spans 613–625 (QPQQQPQQQQPQL). A compositionally biased stretch (polar residues) spans 626 to 639 (NISTGNLPNIQQPM). Low complexity-rich tracts occupy residues 642-669 (SPPLSSNTLVSPTSSSSPTSSNLPTNNS), 694-717 (PQSQQTPSLHSSSQSVLQQKSPPL), and 725-735 (QQQPSQQLPSQ). Polar residues predominate over residues 736 to 752 (IVKNSPPNLSMTNENIS). Low complexity predominate over residues 768 to 789 (SPLINSSNSNITTPNPDSQSQI). The span at 819-828 (SKSSPTQSNI) shows a compositional bias: polar residues. Residues 837–882 (PPQTTISSSSPLLQPQTQPQPQTQPQPQTLQQSTTPSLSSSSTPTI) show a composition bias toward low complexity. Positions 898–918 (QPPPPPPSSQPLQPPPPPPPS) are enriched in pro residues. 2 stretches are compositionally biased toward low complexity: residues 1116-1130 (FSNSDDNESTNNNNN) and 1137-1177 (QQQQ…NITN). Residues 1489–1504 (QSSNIKNDNNPTLSKH) are compositionally biased toward polar residues.

The protein belongs to the Integrator subunit 3 family. Component of the Integrator complex. The core complex associates with protein phosphatase 2A subunits, to form the Integrator-PP2A (INTAC) complex. Component of the SOSS complex.

It localises to the nucleus. The protein resides in the cytoplasm. In terms of biological role, component of the integrator complex, a multiprotein complex that terminates RNA polymerase II (Pol II) transcription in the promoter-proximal region of genes. The integrator complex provides a quality checkpoint during transcription elongation by driving premature transcription termination of transcripts that are unfavorably configured for transcriptional elongation: the complex terminates transcription by (1) catalyzing dephosphorylation of the C-terminal domain (CTD) of Pol II subunit polr2a, (2) degrading the exiting nascent RNA transcript via endonuclease activity and (3) promoting the release of Pol II from bound DNA. The integrator complex is also involved in terminating the synthesis of non-coding Pol II transcripts, such as enhancer RNAs (eRNAs), small nuclear RNAs (snRNAs), telomerase RNAs and long non-coding RNAs (lncRNAs). Component of the SOSS complex, a multiprotein complex that functions downstream of the MRN complex to promote DNA repair and G2/M checkpoint. The SOSS complex associates with single-stranded DNA at DNA lesions and influences diverse endpoints in the cellular DNA damage response including cell-cycle checkpoint activation, recombinational repair and maintenance of genomic stability. The SOSS complex is required for efficient homologous recombination-dependent repair of double-strand breaks (DSBs) and ATM-dependent signaling pathways. In the SOSS complex, it is required for the assembly of the complex and for stabilization of the complex at DNA damage sites. The protein is Integrator complex subunit 3 homolog (ints3) of Dictyostelium discoideum (Social amoeba).